The sequence spans 1309 residues: Lysine-specific demethylase 2B (1309 aa).

Position 26 is a phosphoserine (serine 26). In terms of domain architecture, JmjC spans 147–315 (FSHTKLEHLV…MQLRIYEIED (169 aa)). Threonine 208 is a substrate binding site. 2 residues coordinate Fe cation: histidine 211 and aspartate 213. Lysine 228 is a binding site for substrate. Histidine 283 lines the Fe cation pocket. Residues 378–403 (DMEEESCEQQPQEEEEEEEDKEEEGD) are compositionally biased toward acidic residues. The tract at residues 378-476 (DMEEESCEQQ…PTGSPATEVS (99 aa)) is disordered. Residues 404–413 (GADKTPKPPT) are compositionally biased toward basic and acidic residues. Residues 415–424 (DPTSPTSTPP) are compositionally biased toward low complexity. Serine 447 and serine 450 each carry phosphoserine. A Phosphothreonine modification is found at threonine 466. Polar residues predominate over residues 467–476 (PTGSPATEVS). The residue at position 470 (serine 470) is a Phosphoserine. The CXXC-type zinc finger occupies 579–625 (ARRRRTRCRKCEACLRTECGECHFCKDMKKFGGPGRMKQSCIMRQCI). The Zn(2+) site is built by cysteine 586, cysteine 589, cysteine 592, cysteine 597, cysteine 600, cysteine 603, cysteine 619, cysteine 624, cysteine 635, cysteine 638, cysteine 661, cysteine 664, histidine 669, cysteine 672, cysteine 692, and cysteine 695. Residues 632–698 (TAVCLVCGEA…CWECPKCNHA (67 aa)) form a PHD-type zinc finger. Disordered regions lie at residues 700–816 (KTGK…SLSP) and 828–1005 (QLKP…SASP). A compositionally biased stretch (basic and acidic residues) spans 722 to 772 (KEQKMNRDNKEGQEPAKRRSECEEAPRRRSDEHPKKVPADGILRRKSDDVH). Over residues 792 to 816 (SSLQTSPGSSSHLSPRPPLGSSLSP) the composition is skewed to low complexity. Residues lysine 830 and lysine 863 each participate in a glycyl lysine isopeptide (Lys-Gly) (interchain with G-Cter in SUMO2) cross-link. Over residues 883-892 (SRSSSPTAGP) the composition is skewed to polar residues. Residues 905–914 (KVKMRRKRRL) show a composition bias toward basic residues. Over residues 915–933 (VNKELSKELSKELNHEIQK) the composition is skewed to basic and acidic residues. The stretch at 916–944 (NKELSKELSKELNHEIQKTESTLAHESQQ) forms a coiled coil. Serine 924 is subject to Phosphoserine. Polar residues predominate over residues 934-946 (TESTLAHESQQPI). Serine 948 and serine 952 each carry phosphoserine. The span at 955–968 (DEPKRPLSHCERPH) shows a compositional bias: basic and acidic residues. Phosphoserine occurs at positions 991 and 1004. Residues 1032–1078 (DGAAHVMHREVWMAVFSYLSHRDLCVCMRVCRTWNRWCCDKRLWTRI) enclose the F-box domain. LRR repeat units follow at residues 1106-1127 (WTNI…LRDL), 1129-1155 (LSGC…DVQW), 1195-1220 (GLDI…QLSY), 1221-1250 (CNHI…NLSD), 1251-1275 (CNKV…DLRY), and 1276-1309 (CKQV…QKLS).

Belongs to the JHDM1 histone demethylase family. As to quaternary structure, interacts with SKP1, forming heterodimers. The KDM2B-SKP1 heterodimeric complex interacts with the PCGF1-BCORL heterodimeric complex to form a homotetrameric polycomb repression complex 1 (PRC1.1). Directly interacts with CUL1. The SKP1-KDM2B interacts with UBB. Requires Fe(2+) as cofactor.

It localises to the nucleus. The protein localises to the nucleolus. Its subcellular location is the chromosome. It carries out the reaction N(6),N(6)-dimethyl-L-lysyl(36)-[histone H3] + 2 2-oxoglutarate + 2 O2 = L-lysyl(36)-[histone H3] + 2 formaldehyde + 2 succinate + 2 CO2. Its activity is regulated as follows. Histone demethylase activity is inhibited by fumarate. In terms of biological role, histone demethylase that demethylates 'Lys-4' and 'Lys-36' of histone H3, thereby playing a central role in histone code. Preferentially demethylates trimethylated H3 'Lys-4' and dimethylated H3 'Lys-36' residue while it has weak or no activity for mono- and tri-methylated H3 'Lys-36'. Preferentially binds the transcribed region of ribosomal RNA and represses the transcription of ribosomal RNA genes which inhibits cell growth and proliferation. May also serve as a substrate-recognition component of the SCF (SKP1-CUL1-F-box protein)-type E3 ubiquitin ligase complex. This Mus musculus (Mouse) protein is Lysine-specific demethylase 2B (Kdm2b).